The chain runs to 332 residues: Ribose-phosphate pyrophosphokinase (332 aa).

57–59 (DGE) contacts ATP. The Mg(2+) site is built by H150 and D189. The active site involves K213. Residues R215, D239, and 243–247 (DTAGT) contribute to the D-ribose 5-phosphate site.

The protein belongs to the ribose-phosphate pyrophosphokinase family. Class I subfamily. Homohexamer. It depends on Mg(2+) as a cofactor.

It is found in the cytoplasm. It catalyses the reaction D-ribose 5-phosphate + ATP = 5-phospho-alpha-D-ribose 1-diphosphate + AMP + H(+). It functions in the pathway metabolic intermediate biosynthesis; 5-phospho-alpha-D-ribose 1-diphosphate biosynthesis; 5-phospho-alpha-D-ribose 1-diphosphate from D-ribose 5-phosphate (route I): step 1/1. Functionally, involved in the biosynthesis of the central metabolite phospho-alpha-D-ribosyl-1-pyrophosphate (PRPP) via the transfer of pyrophosphoryl group from ATP to 1-hydroxyl of ribose-5-phosphate (Rib-5-P). The sequence is that of Ribose-phosphate pyrophosphokinase from Gloeobacter violaceus (strain ATCC 29082 / PCC 7421).